Here is a 232-residue protein sequence, read N- to C-terminus: Octanoyltransferase (232 aa).

The 187-residue stretch at 40 to 226 (GSAPERVWLL…TWQDLFGSVP (187 aa)) folds into the BPL/LPL catalytic domain. Substrate contacts are provided by residues 79 to 86 (RGGQWTYH), 157 to 159 (ALG), and 170 to 172 (GVA). Cysteine 188 functions as the Acyl-thioester intermediate in the catalytic mechanism.

It belongs to the LipB family.

It localises to the cytoplasm. It carries out the reaction octanoyl-[ACP] + L-lysyl-[protein] = N(6)-octanoyl-L-lysyl-[protein] + holo-[ACP] + H(+). It participates in protein modification; protein lipoylation via endogenous pathway; protein N(6)-(lipoyl)lysine from octanoyl-[acyl-carrier-protein]: step 1/2. In terms of biological role, catalyzes the transfer of endogenously produced octanoic acid from octanoyl-acyl-carrier-protein onto the lipoyl domains of lipoate-dependent enzymes. Lipoyl-ACP can also act as a substrate although octanoyl-ACP is likely to be the physiological substrate. The sequence is that of Octanoyltransferase from Gluconacetobacter diazotrophicus (strain ATCC 49037 / DSM 5601 / CCUG 37298 / CIP 103539 / LMG 7603 / PAl5).